The sequence spans 529 residues: Structure-specific endonuclease subunit SLX1 homolog 1 (529 aa).

Residues 4-89 (RFHCVYLLTS…PTKSTRLKTQ (86 aa)) form the GIY-YIG domain. An SLX1-type zinc finger spans residues 231–364 (CALCSLPLRS…PCQPCPCPLC (134 aa)). Disordered stretches follow at residues 275–305 (VTMG…MDAH), 409–437 (NSSL…YCGD), and 470–501 (SVSL…RMTD). A compositionally biased stretch (basic and acidic residues) spans 282–297 (RNERSGEYSNKIKDDS).

It belongs to the SLX1 family. As to quaternary structure, forms a heterodimer with a member of the SLX4 family. A divalent metal cation is required as a cofactor.

The protein resides in the nucleus. Functionally, catalytic subunit of a heterodimeric structure-specific endonuclease that resolves DNA secondary structures generated during DNA repair and recombination. Has endonuclease activity towards branched DNA substrates, introducing single-strand cuts in duplex DNA close to junctions with ss-DNA. This is Structure-specific endonuclease subunit SLX1 homolog 1 from Trypanosoma cruzi (strain CL Brener).